A 244-amino-acid polypeptide reads, in one-letter code: tRNA (guanine-N(7)-)-methyltransferase (244 aa).

S-adenosyl-L-methionine-binding residues include Glu75, Glu100, Asp127, and Asp150. Asp150 is an active-site residue. Substrate is bound by residues Lys154, Asp186, and 223–226; that span reads TRFE.

The protein belongs to the class I-like SAM-binding methyltransferase superfamily. TrmB family.

It catalyses the reaction guanosine(46) in tRNA + S-adenosyl-L-methionine = N(7)-methylguanosine(46) in tRNA + S-adenosyl-L-homocysteine. The protein operates within tRNA modification; N(7)-methylguanine-tRNA biosynthesis. Catalyzes the formation of N(7)-methylguanine at position 46 (m7G46) in tRNA. In Xylella fastidiosa (strain M12), this protein is tRNA (guanine-N(7)-)-methyltransferase.